Reading from the N-terminus, the 94-residue chain is Co-chaperonin GroES (94 aa).

This sequence belongs to the GroES chaperonin family. Heptamer of 7 subunits arranged in a ring. Interacts with the chaperonin GroEL.

The protein localises to the cytoplasm. Its function is as follows. Together with the chaperonin GroEL, plays an essential role in assisting protein folding. The GroEL-GroES system forms a nano-cage that allows encapsulation of the non-native substrate proteins and provides a physical environment optimized to promote and accelerate protein folding. GroES binds to the apical surface of the GroEL ring, thereby capping the opening of the GroEL channel. This is Co-chaperonin GroES from Bacillus mycoides (strain KBAB4) (Bacillus weihenstephanensis).